We begin with the raw amino-acid sequence, 169 residues long: Peptide methionine sulfoxide reductase MsrA (169 aa).

Cysteine 10 is a catalytic residue.

This sequence belongs to the MsrA Met sulfoxide reductase family.

It catalyses the reaction L-methionyl-[protein] + [thioredoxin]-disulfide + H2O = L-methionyl-(S)-S-oxide-[protein] + [thioredoxin]-dithiol. The enzyme catalyses [thioredoxin]-disulfide + L-methionine + H2O = L-methionine (S)-S-oxide + [thioredoxin]-dithiol. In terms of biological role, has an important function as a repair enzyme for proteins that have been inactivated by oxidation. Catalyzes the reversible oxidation-reduction of methionine sulfoxide in proteins to methionine. The chain is Peptide methionine sulfoxide reductase MsrA from Streptococcus pyogenes serotype M3 (strain ATCC BAA-595 / MGAS315).